The sequence spans 480 residues: Cysteine--tRNA ligase (480 aa).

Cys27 is a binding site for Zn(2+). The short motif at 29–39 (PTVYNYAHIGN) is the 'HIGH' region element. Positions 221, 246, and 250 each coordinate Zn(2+). Positions 278–282 (KMSKS) match the 'KMSKS' region motif. Lys281 provides a ligand contact to ATP.

It belongs to the class-I aminoacyl-tRNA synthetase family. In terms of assembly, monomer. The cofactor is Zn(2+).

The protein resides in the cytoplasm. The enzyme catalyses tRNA(Cys) + L-cysteine + ATP = L-cysteinyl-tRNA(Cys) + AMP + diphosphate. The polypeptide is Cysteine--tRNA ligase (Borreliella afzelii (strain PKo) (Borrelia afzelii)).